We begin with the raw amino-acid sequence, 306 residues long: tRNA dimethylallyltransferase (306 aa).

11-18 (GPTAVGKS) is a binding site for ATP. Position 13–18 (13–18 (TAVGKS)) interacts with substrate. An interaction with substrate tRNA region spans residues 35–38 (DSIQ).

The protein belongs to the IPP transferase family. In terms of assembly, monomer. It depends on Mg(2+) as a cofactor.

It catalyses the reaction adenosine(37) in tRNA + dimethylallyl diphosphate = N(6)-dimethylallyladenosine(37) in tRNA + diphosphate. Catalyzes the transfer of a dimethylallyl group onto the adenine at position 37 in tRNAs that read codons beginning with uridine, leading to the formation of N6-(dimethylallyl)adenosine (i(6)A). The sequence is that of tRNA dimethylallyltransferase from Borreliella burgdorferi (strain ATCC 35210 / DSM 4680 / CIP 102532 / B31) (Borrelia burgdorferi).